Consider the following 217-residue polypeptide: Response regulator RR06 (217 aa).

The region spanning 2 to 115 is the Response regulatory domain; it reads NILVADDEEM…LLVKRIKALI (114 aa). Asp-51 carries the post-translational modification 4-aspartylphosphate. Positions 122-217 form a DNA-binding region, ompR/PhoB-type; sequence EDIWRYQDVT…VKNVGYKISL (96 aa).

In terms of processing, phosphorylated at threonine residues by StkP; threonine phosphorylation enhances RR06 binding to DNA and may also increase expression of CbpA. May be de-phosphorylated by PhpP.

Functionally, member of the two-component regulatory system HK06/RR06 involved in regulation of target genes, including choline-binding protein CbpA. Binds to the promoter region of CbpA and directly activates transcription. The chain is Response regulator RR06 from Streptococcus pneumoniae serotype 2 (strain D39 / NCTC 7466).